A 120-amino-acid chain; its full sequence is Large ribosomal subunit protein bL17 (120 aa).

The protein belongs to the bacterial ribosomal protein bL17 family. As to quaternary structure, part of the 50S ribosomal subunit. Contacts protein L32.

The polypeptide is Large ribosomal subunit protein bL17 (Bacillus subtilis (strain 168)).